A 356-amino-acid chain; its full sequence is Putative transposase y4zB (356 aa).

A compositionally biased stretch (low complexity) spans 1-19 (MITTGTPTTRRSAAGTAGA). 2 disordered regions span residues 1–54 (MITT…PLAD) and 334–356 (PPPV…FAYV).

Belongs to the transposase 11 family.

This Sinorhizobium fredii (strain NBRC 101917 / NGR234) protein is Putative transposase y4zB.